Reading from the N-terminus, the 395-residue chain is Axin-like protein 1 (395 aa).

The region spanning 4–132 (RSKTFSDRIL…TTTADVSNTW (129 aa)) is the RGS domain. Residues 190–230 (QETKNSSETEEEKKKERSADPYGSDGFAPPPQSTQTHTLRN) are disordered. The segment covering 194–208 (NSSETEEEKKKERSA) has biased composition (basic and acidic residues). A DIX domain is found at 301 to 386 (EIQKLTVELR…RITAICRMCP (86 aa)).

In terms of assembly, interacts with bar-1, dsh-2, gsk-3, and mig-5.

Its function is as follows. Works in parallel with pry-1 in negatively regulating bar-1 signaling in vulval precursor cells and Q neuroblasts. Shown to have a role in excretory cell development. In Caenorhabditis briggsae, this protein is Axin-like protein 1 (axl-1).